The primary structure comprises 242 residues: Small ribosomal subunit protein uS2 (242 aa).

The protein belongs to the universal ribosomal protein uS2 family.

This Shewanella putrefaciens (strain CN-32 / ATCC BAA-453) protein is Small ribosomal subunit protein uS2.